Reading from the N-terminus, the 428-residue chain is NADH-ubiquinone oxidoreductase chain 2 (428 aa).

The next 14 helical transmembrane spans lie at 22-42 (IAFLSLLGYFVIMLNIWLHFG), 59-79 (LDESILSALLFILFLGLVIMN), 84-104 (LGWEFHLLLMGGLTGAIYMLT), 108-128 (LLLMVVGFEFLNLSTYLILSL), 140-160 (LLSSAFYTTLLLLAISFFYGL), 185-205 (ILLLGTIAFKLGLVPAHLWVP), 218-238 (WMGSVPKAAVLLWLPTIYPLL), 241-261 (LAPFLLVLSALSFLLSAVLMA), 269-289 (FLAYSAIGHLGFVVAAFAIGD), 292-312 (AYGYYIFIYMIATLAQFVLLS), 332-352 (LGLGFLVIVLTMASLPPFAGF), 356-376 (LLVLFGFLEIGYGIFAVLLIL), 384-404 (YYLKWIQTTFFSVVPFASAPI), and 408-428 (YPNLVSFLVTLILPSTLLLLL).

The protein belongs to the complex I subunit 2 family.

Its subcellular location is the mitochondrion inner membrane. The catalysed reaction is a ubiquinone + NADH + 5 H(+)(in) = a ubiquinol + NAD(+) + 4 H(+)(out). Core subunit of the mitochondrial membrane respiratory chain NADH dehydrogenase (Complex I) that is believed to belong to the minimal assembly required for catalysis. Complex I functions in the transfer of electrons from NADH to the respiratory chain. The immediate electron acceptor for the enzyme is believed to be ubiquinone. In Hyaloraphidium curvatum (Lower fungus), this protein is NADH-ubiquinone oxidoreductase chain 2.